We begin with the raw amino-acid sequence, 677 residues long: Transmembrane and coiled-coil domain-containing protein 3 (677 aa).

The N-terminal stretch at 1–22 (MKVLGRSFFWVLFPVLPWAVQA) is a signal peptide. Residues 124–204 (DYKDVVNMKE…EEEIEEHAFD (81 aa)) adopt a coiled-coil conformation. 2 N-linked (GlcNAc...) asparagine glycosylation sites follow: Asn206 and Asn230. Helical transmembrane passes span 286–306 (WLCT…GVLL), 317–337 (IVQV…LVGL), 350–370 (ISLQ…LLWG), 416–436 (VLLG…AVMP), 456–476 (ILVL…LCLV), 498–518 (EILI…TELL), 554–574 (FLAI…FVAY), 578–598 (VLVF…ALVL), 608–628 (YIKW…FVLG), and 640–660 (EVYL…PVLW).

It belongs to the monovalent cation:proton antiporter 2 (CPA2) transporter (TC 2.A.37) family. Expressed in the cornea, lens capsule and choroid-retinal pigment epithelium (at protein level).

Its subcellular location is the membrane. Probable Na(+)/H(+) antiporter. The polypeptide is Transmembrane and coiled-coil domain-containing protein 3 (TMCO3) (Homo sapiens (Human)).